The following is a 134-amino-acid chain: Inner membrane protein YqjE (134 aa).

At 1–55 (MADTHHAQGPGKSVLGIGQRIVSIMVEMVETRLRLAVVELEEEKANLFQLLLMLG) the chain is on the cytoplasmic side. A helical membrane pass occupies residues 56–76 (LTMLFAAFGLMSLMVLIIWAV). At 77 to 83 (DPQYRLN) the chain is on the periplasmic side. The helical transmembrane segment at 84–104 (AMIATTVVLLLLALIGGIWTL) threads the bilayer. Topologically, residues 105–134 (RKSRKSTLLRHTRHELANDRQLLEEESREQ) are cytoplasmic.

It is found in the cell inner membrane. This Escherichia coli O157:H7 protein is Inner membrane protein YqjE (yqjE).